Here is a 149-residue protein sequence, read N- to C-terminus: Large ribosomal subunit protein uL15A (149 aa).

The segment at 21-40 (RIGKHRKQRGGRGNAGGQHH) is disordered.

The protein belongs to the universal ribosomal protein uL15 family. In terms of assembly, component of the large ribosomal subunit.

The protein localises to the cytoplasm. The protein resides in the cytosol. It localises to the endoplasmic reticulum. Component of the large ribosomal subunit. The ribosome is a large ribonucleoprotein complex responsible for the synthesis of proteins in the cell. The polypeptide is Large ribosomal subunit protein uL15A (rpl27a-1) (Entamoeba histolytica (strain ATCC 30459 / HM-1:IMSS / ABRM)).